A 370-amino-acid polypeptide reads, in one-letter code: 4-hydroxy-3-methylbut-2-en-1-yl diphosphate synthase (flavodoxin) (370 aa).

Cys-268, Cys-271, Cys-303, and Glu-310 together coordinate [4Fe-4S] cluster.

The protein belongs to the IspG family. It depends on [4Fe-4S] cluster as a cofactor.

It catalyses the reaction (2E)-4-hydroxy-3-methylbut-2-enyl diphosphate + oxidized [flavodoxin] + H2O + 2 H(+) = 2-C-methyl-D-erythritol 2,4-cyclic diphosphate + reduced [flavodoxin]. It participates in isoprenoid biosynthesis; isopentenyl diphosphate biosynthesis via DXP pathway; isopentenyl diphosphate from 1-deoxy-D-xylulose 5-phosphate: step 5/6. Converts 2C-methyl-D-erythritol 2,4-cyclodiphosphate (ME-2,4cPP) into 1-hydroxy-2-methyl-2-(E)-butenyl 4-diphosphate. This chain is 4-hydroxy-3-methylbut-2-en-1-yl diphosphate synthase (flavodoxin), found in Bacillus cereus (strain G9842).